A 296-amino-acid chain; its full sequence is Acetylglutamate kinase (296 aa).

Residues 68-69, R90, and N195 each bind substrate; that span reads GG.

The protein belongs to the acetylglutamate kinase family. ArgB subfamily.

The protein localises to the cytoplasm. It carries out the reaction N-acetyl-L-glutamate + ATP = N-acetyl-L-glutamyl 5-phosphate + ADP. It functions in the pathway amino-acid biosynthesis; L-arginine biosynthesis; N(2)-acetyl-L-ornithine from L-glutamate: step 2/4. Functionally, catalyzes the ATP-dependent phosphorylation of N-acetyl-L-glutamate. In Desulfotalea psychrophila (strain LSv54 / DSM 12343), this protein is Acetylglutamate kinase.